Consider the following 567-residue polypeptide: Diphtheria toxin (567 aa).

The N-terminal stretch at 1-32 is a signal peptide; it reads MLVRGYVVSRKLFASILIGALLGIGAPPSAHA. NAD(+)-binding residues include His-53 and Tyr-97. The active site involves Glu-180. Intrachain disulfides connect Cys-218-Cys-233 and Cys-493-Cys-503.

In terms of assembly, homodimer. Proteolytic activation by host furin cleaves the protein in two parts, Diphtheria toxin fragment A and Diphtheria toxin fragment B; which remain associated via a disulfide bond.

The catalysed reaction is diphthamide-[translation elongation factor 2] + NAD(+) = N-(ADP-D-ribosyl)diphthamide-[translation elongation factor 2] + nicotinamide + H(+). Its activity is regulated as follows. Partially inhibited by 1,8-naphthalimide (NAP). In terms of biological role, diphtheria toxin, produced by a phage infecting Corynebacterium diphtheriae, is a proenzyme that, after activation, catalyzes the covalent attachment of the ADP ribose moiety of NAD to eukaryotic elongation factor 2 (eEF-2). Fragment A is the catalytic portion responsible for enzymatic ADP-ribosylation of elongation factor 2, while fragment B is responsible for binding of toxin to cell receptors and entry of fragment A. The chain is Diphtheria toxin from Corynebacterium diphtheriae.